Reading from the N-terminus, the 265-residue chain is 3-methyl-2-oxobutanoate hydroxymethyltransferase (265 aa).

The Mg(2+) site is built by Asp44 and Asp83. Residues 44 to 45, Asp83, and Lys113 each bind 3-methyl-2-oxobutanoate; that span reads DS. Residue Glu115 participates in Mg(2+) binding. The active-site Proton acceptor is Glu183.

The protein belongs to the PanB family. As to quaternary structure, homodecamer; pentamer of dimers. It depends on Mg(2+) as a cofactor.

Its subcellular location is the cytoplasm. The catalysed reaction is 3-methyl-2-oxobutanoate + (6R)-5,10-methylene-5,6,7,8-tetrahydrofolate + H2O = 2-dehydropantoate + (6S)-5,6,7,8-tetrahydrofolate. It functions in the pathway cofactor biosynthesis; (R)-pantothenate biosynthesis; (R)-pantoate from 3-methyl-2-oxobutanoate: step 1/2. Catalyzes the reversible reaction in which hydroxymethyl group from 5,10-methylenetetrahydrofolate is transferred onto alpha-ketoisovalerate to form ketopantoate. The polypeptide is 3-methyl-2-oxobutanoate hydroxymethyltransferase (Leptospira borgpetersenii serovar Hardjo-bovis (strain JB197)).